The sequence spans 207 residues: Large ribosomal subunit protein uL3 (207 aa).

It belongs to the universal ribosomal protein uL3 family. In terms of assembly, part of the 50S ribosomal subunit. Forms a cluster with proteins L14 and L19.

Its function is as follows. One of the primary rRNA binding proteins, it binds directly near the 3'-end of the 23S rRNA, where it nucleates assembly of the 50S subunit. The chain is Large ribosomal subunit protein uL3 from Fervidobacterium nodosum (strain ATCC 35602 / DSM 5306 / Rt17-B1).